The following is a 145-amino-acid chain: Large ribosomal subunit protein bL17 (145 aa).

Belongs to the bacterial ribosomal protein bL17 family. Part of the 50S ribosomal subunit. Contacts protein L32.

The polypeptide is Large ribosomal subunit protein bL17 (Orientia tsutsugamushi (strain Ikeda) (Rickettsia tsutsugamushi)).